A 200-amino-acid chain; its full sequence is Nascent polypeptide-associated complex subunit alpha (200 aa).

Residues 1–19 (MADPRVEELPEEEVKKTQV) are compositionally biased toward basic and acidic residues. Disordered stretches follow at residues 1–54 (MADP…NEKK) and 118–165 (AAQQ…EDKD). The span at 20–34 (EDLDNSSDDESDIEA) shows a compositional bias: acidic residues. Positions 49 to 114 (SRNEKKARKA…AKIEDLNASA (66 aa)) constitute an NAC-A/B domain. Basic and acidic residues predominate over residues 127–146 (AEHDHAGHTHEHEEAGKAKE). Over residues 147–160 (EEEEDEGEEVDAEG) the composition is skewed to acidic residues. A UBA domain is found at 161–200 (IEDKDIELVMTQANVSRKKAIKALKENDNDIVNSIMALSI).

This sequence belongs to the NAC-alpha family. As to quaternary structure, part of the nascent polypeptide-associated complex (NAC), consisting of npc-1/egd2 and npc-2/egd1. NAC associates with ribosomes via npc-2/egd1.

Its subcellular location is the cytoplasm. It localises to the nucleus. In terms of biological role, component of the nascent polypeptide-associated complex (NAC), a dynamic component of the ribosomal exit tunnel, protecting the emerging polypeptides from interaction with other cytoplasmic proteins to ensure appropriate nascent protein targeting. The NAC complex also promotes mitochondrial protein import by enhancing productive ribosome interactions with the outer mitochondrial membrane and blocks the inappropriate interaction of ribosomes translating non-secretory nascent polypeptides with translocation sites in the membrane of the endoplasmic reticulum. Npc-1/egd2 may also be involved in transcription regulation. The chain is Nascent polypeptide-associated complex subunit alpha (npc-1) from Neurospora crassa (strain ATCC 24698 / 74-OR23-1A / CBS 708.71 / DSM 1257 / FGSC 987).